A 443-amino-acid chain; its full sequence is 5-methylthioadenosine/S-adenosylhomocysteine deaminase 1 (443 aa).

Zn(2+)-binding residues include His-69 and His-71. Substrate is bound by residues Glu-98 and His-191. His-218 contributes to the Zn(2+) binding site. Substrate is bound by residues Glu-221 and Asp-306. Zn(2+) is bound at residue Asp-306.

This sequence belongs to the metallo-dependent hydrolases superfamily. MTA/SAH deaminase family. It depends on Zn(2+) as a cofactor.

It catalyses the reaction S-adenosyl-L-homocysteine + H2O + H(+) = S-inosyl-L-homocysteine + NH4(+). The enzyme catalyses S-methyl-5'-thioadenosine + H2O + H(+) = S-methyl-5'-thioinosine + NH4(+). In terms of biological role, catalyzes the deamination of 5-methylthioadenosine and S-adenosyl-L-homocysteine into 5-methylthioinosine and S-inosyl-L-homocysteine, respectively. Is also able to deaminate adenosine. This is 5-methylthioadenosine/S-adenosylhomocysteine deaminase 1 from Syntrophus aciditrophicus (strain SB).